A 199-amino-acid polypeptide reads, in one-letter code: Potassium-transporting ATPase KdpC subunit 2 (199 aa).

A helical transmembrane segment spans residues 13–33; sequence ITLIFWLVTAIIYPLAILVVG.

This sequence belongs to the KdpC family. In terms of assembly, the system is composed of three essential subunits: KdpA, KdpB and KdpC.

Its subcellular location is the cell inner membrane. In terms of biological role, part of the high-affinity ATP-driven potassium transport (or Kdp) system, which catalyzes the hydrolysis of ATP coupled with the electrogenic transport of potassium into the cytoplasm. This subunit acts as a catalytic chaperone that increases the ATP-binding affinity of the ATP-hydrolyzing subunit KdpB by the formation of a transient KdpB/KdpC/ATP ternary complex. In Nostoc sp. (strain PCC 7120 / SAG 25.82 / UTEX 2576), this protein is Potassium-transporting ATPase KdpC subunit 2.